Reading from the N-terminus, the 1259-residue chain is Protein flightless-1 homolog (1259 aa).

LRR repeat units lie at residues 7-32, 33-55, 56-78, 80-103, 104-126, 128-149, 150-173, 176-201, 222-245, 247-268, 269-291, 293-316, 317-339, 340-363, and 365-385; these read LPFI…VKSM, TSLR…LASL, QKLE…LSSL, NLRA…IFQL, DDLS…LENS, NMLV…LFIN, LTDL…MRRL, LQTL…VSLQ, LSNL…LYSL, NLKR…IDQW, TKLE…ICKL, KLKK…VGKL, SNLV…LCRC, GKLK…HFLT, and LEVL…PVDR. Gelsolin-like repeat units follow at residues 509 to 589, 628 to 702, 757 to 830, and 1170 to 1225; these read IPIQ…SEEF, NIRL…PEFW, DVVP…CQVF, and EKCS…RSKD.

Expressed in ventricular cardiomyocytes, where it particularly localizes to intercalated disks and costamere-like structures (at protein level).

It is found in the nucleus. The protein resides in the cytoplasm. The protein localises to the cytoskeleton. It localises to the microtubule organizing center. Its subcellular location is the centrosome. It is found in the cell junction. The protein resides in the focal adhesion. Is a regulator of actin polymerization, required for proper myofibril organization and the assembly of cardiomyocyte cell adhesion complexes. Is a regulator of the length of sarcomeric thin filaments. Regulates cytoskeletal rearrangements involved in cytokinesis and cell migration, by inhibiting Rac1-dependent paxillin phosphorylation. May play a role as coactivator in transcriptional activation by hormone-activated nuclear receptors (NR) and acts in cooperation with NCOA2 and CARM1. Involved in estrogen hormone signaling. The chain is Protein flightless-1 homolog from Danio rerio (Zebrafish).